The primary structure comprises 364 residues: Chorismate synthase (364 aa).

Arg-48 lines the NADP(+) pocket. FMN contacts are provided by residues 131-133, 243-244, Gly-288, 303-307, and Arg-329; these read RSS, NA, and KPTSS.

The protein belongs to the chorismate synthase family. Homotetramer. It depends on FMNH2 as a cofactor.

The enzyme catalyses 5-O-(1-carboxyvinyl)-3-phosphoshikimate = chorismate + phosphate. The protein operates within metabolic intermediate biosynthesis; chorismate biosynthesis; chorismate from D-erythrose 4-phosphate and phosphoenolpyruvate: step 7/7. Functionally, catalyzes the anti-1,4-elimination of the C-3 phosphate and the C-6 proR hydrogen from 5-enolpyruvylshikimate-3-phosphate (EPSP) to yield chorismate, which is the branch point compound that serves as the starting substrate for the three terminal pathways of aromatic amino acid biosynthesis. This reaction introduces a second double bond into the aromatic ring system. This Brucella abortus (strain S19) protein is Chorismate synthase.